A 270-amino-acid polypeptide reads, in one-letter code: LIM zinc-binding domain-containing Nebulette (270 aa).

The 61-residue stretch at 3-63 (PQCARCGKVV…NAHYPKQSFT (61 aa)) folds into the LIM zinc-binding domain. One copy of the Nebulin 1 repeat lies at 61 to 95 (SFTTVADTPENLRLKQQSELQSQVKYKRDFEESKG). Arg96 is modified (omega-N-methylarginine). The Nebulin 2 repeat unit spans residues 97–131 (GFSIVTDTPELQRLKRTQEQISNVKYHEDFEKTKG). Position 132 is an omega-N-methylarginine (Arg132). One copy of the Nebulin 3 repeat lies at 133 to 159 (GFTPVVDDPVTERVRKSTQVVSDAAYK). A Phosphothreonine modification is found at Thr135. In terms of domain architecture, SH3 spans 210–270 (AHLRTYRAMY…LPANYIEFVN (61 aa)). The residue at position 230 (Ser230) is a Phosphoserine.

Its subcellular location is the cytoplasm. In terms of biological role, binds to actin and plays an important role in the assembly of the Z-disk. Isoform 2 might play a role in the assembly of focal adhesion. This Mus musculus (Mouse) protein is LIM zinc-binding domain-containing Nebulette (Nebl).